A 351-amino-acid chain; its full sequence is Calcium homeostasis modulator 1 (351 aa).

At 1–20 (MDKFRMMFQFLQSNQESFMN) the chain is on the cytoplasmic side. The interval 9-36 (QFLQSNQESFMNGICGIMALASAQMYSS) is central pore. A helical transmembrane segment spans residues 21-36 (GICGIMALASAQMYSS). Residues 37–48 (FEFSCPCMPEYN) are Extracellular-facing. 2 disulfides stabilise this stretch: Cys-41/Cys-126 and Cys-43/Cys-160. The chain crosses the membrane as a helical span at residues 49 to 71 (YTYGIGLLIIPPIWFFLLGFVLN). The tract at residues 62-69 (WFFLLGFV) is phospholipid-binding. The Cytoplasmic portion of the chain corresponds to 72–98 (NNVSVLAEEWKRPTGRRTKDPSVLRYM). A helical transmembrane segment spans residues 99–124 (LCSITQRSLIAPAVWVSVTLMDGKSF). Cys-100 is lipidated: S-palmitoyl cysteine. Positions 104-116 (QRSLIAPAVWVSV) are phospholipid-binding. The Extracellular segment spans residues 125–177 (LCAFSINLDIEKFGNASLVIGMTETEKLKFLARIPCKDLFEDNEVRVAATRYI). Residue Asn-139 is glycosylated (N-linked (GlcNAc...) asparagine). A helical membrane pass occupies residues 178–203 (KCISQACGWMFLLMMTFTAFLIRAIR). The tract at residues 189 to 199 (LLMMTFTAFLI) is phospholipid-binding. Residues 204–351 (PCFTQAAFLK…KEWAVYYSKV (148 aa)) are Cytoplasmic-facing. A lipid anchor (S-palmitoyl cysteine) is attached at Cys-205. The tract at residues 259-281 (HRHQSKDTSDAEEEEKQRSDEDK) is disordered. The segment covering 263–281 (SKDTSDAEEEEKQRSDEDK) has biased composition (basic and acidic residues).

It belongs to the CALHM family. In terms of assembly, oligomerizes to form hexamers and octamers. Does not form gap junctions. Associates with CALHM3 as a pore-forming subunit in a hetero-hexameric channel complex. N-glycosylated. In terms of processing, palmitoylated.

Its subcellular location is the cell membrane. The protein resides in the endoplasmic reticulum membrane. The protein localises to the basolateral cell membrane. It carries out the reaction ATP(in) = ATP(out). The catalysed reaction is Ca(2+)(in) = Ca(2+)(out). It catalyses the reaction Mg(2+)(in) = Mg(2+)(out). The enzyme catalyses Na(+)(in) = Na(+)(out). It carries out the reaction K(+)(in) = K(+)(out). The catalysed reaction is Li(+)(in) = Li(+)(out). It catalyses the reaction Rb(+)(in) = Rb(+)(out). The enzyme catalyses Cs(+)(in) = Cs(+)(out). It carries out the reaction chloride(in) = chloride(out). With respect to regulation, activated in response to membrane depolarization and low extracellular Ca(2+) concentration. Inhibited by ruthenium red. In terms of biological role, pore-forming subunit of a voltage-gated ion channel. Has poor ion selectivity and forms a wide pore that mediates permeation of small ions including Ca(2+), Na(+), K(+) and Cl(-), as well as larger ions such as ATP(4-). The sequence is that of Calcium homeostasis modulator 1 from Oryzias latipes (Japanese rice fish).